The sequence spans 822 residues: Nuclear factor of activated T-cells, cytoplasmic 1 (822 aa).

The interval 110 to 115 is calcineurin-binding; it reads PRIEIT. The transactivation domain A (TAD-A) stretch occupies residues 118-210; it reads LGLHHNNGQF…CVSPKTTDPE (93 aa). Positions 192–206 are enriched in polar residues; the sequence is PQTSPWQSPCVSPKT. The interval 192-289 is disordered; the sequence is PQTSPWQSPC…HSSPRVSVTD (98 aa). Tandem repeats lie at residues 195–211 and 225–241. Positions 195 to 290 are 3 X SP repeats; sequence SPWQSPCVSP…SSPRVSVTDD (96 aa). Residues Ser-225 and Ser-229 each carry the phosphoserine modification. Residues 225–242 show a composition bias toward low complexity; sequence SPRHSPSTSPRTSVTEES. Ser-237 is subject to Phosphoserine; by PKA. The Nuclear localization signal motif lies at 257-259; sequence KRK. Repeat 3 spans residues 274 to 290; the sequence is SPTPSPHSSPRVSVTDD. Ser-286 carries the post-translational modification Phosphoserine; by PKA. Residues 302–313 carry the Nuclear export signal motif; sequence SAIVAAINALST. Residues 400–582 enclose the RHD domain; sequence PSLPALDWQL…NPIECSQRSA (183 aa). Residues 429–436 mediate DNA binding; the sequence is RAHYETEG. Residues 672–674 carry the Nuclear localization signal motif; it reads KRK. Residues 772 to 822 are disordered; sequence GPGHLGLQRPAGGVLGGQEAPRPGGPHPGAPQLHPLNLSQSIVTRLTEPQP. A compositionally biased stretch (polar residues) spans 808–822; that stretch reads NLSQSIVTRLTEPQP.

Member of the multicomponent NFATC transcription complex that consists of at least two components, a pre-existing cytoplasmic component NFATC2 and an inducible nuclear component NFATC1. Other members such as NFATC4, NFATC3 or members of the activating protein-1 family, MAF, GATA4 and Cbp/p300 can also bind the complex. NFATC proteins bind to DNA as monomers. Interacts with HOMER2 and HOMER3; this interaction may compete with calcineurin/PPP3CA-binding and hence prevent NFATC1 dephosphorylation and activation. Interacts with TLE6/GRG6. In terms of processing, phosphorylated by NFATC-kinase and GSK3B; phosphorylation induces NFATC1 nuclear exit and dephosphorylation by calcineurin promotes nuclear import. Phosphorylation by PKA and DYRK2 negatively modulates nuclear accumulation, and promotes subsequent phosphorylation by GSK3B or casein kinase 1.

Its subcellular location is the cytoplasm. The protein localises to the nucleus. Functionally, plays a role in the inducible expression of cytokine genes in T-cells, especially in the induction of the IL-2 or IL-4 gene transcription. Also controls gene expression in embryonic cardiac cells. Could regulate not only the activation and proliferation but also the differentiation and programmed death of T-lymphocytes as well as lymphoid and non-lymphoid cells. Required for osteoclastogenesis and regulates many genes important for osteoclast differentiation and function. This chain is Nuclear factor of activated T-cells, cytoplasmic 1 (NFATC1), found in Sus scrofa (Pig).